The following is a 678-amino-acid chain: SPS-sensor component PTR3 (678 aa).

Disordered regions lie at residues 111-158 (TGQG…SDPT) and 179-211 (ANTE…SSLL). The segment covering 127–144 (TSPSSSSLSLTPSRSSST) has biased composition (low complexity). Residues 149–158 (ADNKTLSDPT) are compositionally biased toward basic and acidic residues. Residues 179 to 194 (ANTEVGSDHPLTTGTT) are compositionally biased toward polar residues.

As to quaternary structure, homodimer. Component of the plasma membrane SPS (SSY1-PTR3-SSY5) amino acid sensor complex. Interacts directly with SSY1 and SSY5. In terms of processing, hyperphosphorylated in response to extracellular amino acids and dependent on the amino acid sensor component SSY1. Phosphorylation is positively regulated by casein kinases YCK1 and YCK2, and negatively regulated by phosphatase PP2A regulatory subunit RTS1.

It localises to the cell membrane. In terms of biological role, component of the SPS-sensor system, which regulates the expression of several amino acid-metabolizing enzymes and amino acid- and peptide-permeases in response to extracellular amino acid levels by controlling the activity of two transcription factors, STP1 and STP2. The polypeptide is SPS-sensor component PTR3 (PTR3) (Saccharomyces cerevisiae (strain ATCC 204508 / S288c) (Baker's yeast)).